A 345-amino-acid chain; its full sequence is uncharacterized protein (345 aa).

This sequence belongs to the cycloisomerase 2 family.

This is an uncharacterized protein from Staphylococcus saprophyticus subsp. saprophyticus (strain ATCC 15305 / DSM 20229 / NCIMB 8711 / NCTC 7292 / S-41).